The primary structure comprises 515 residues: Tripartite motif-containing protein 5 (515 aa).

A2 carries the post-translational modification N-acetylalanine. The RING-type zinc-finger motif lies at C15–R60. S87 carries the phosphoserine modification. The B box-type zinc-finger motif lies at Q92–M133. 4 residues coordinate Zn(2+): C97, H100, C119, and H125. Residues A137 to Q225 adopt a coiled-coil conformation. The tract at residues F187–N200 is required for interaction with GABARAP and for autophagy. One can recognise a B30.2/SPRY domain in the interval L283–S515.

This sequence belongs to the TRIM/RBCC family. Can form homodimers and homotrimers. In addition to lower-order dimerization, also exhibits a higher-order multimerization and both low- and high-order multimerizations are essential for its restriction activity. Interacts with BTBD1 and BTBD2. Interacts with PSMC4, PSMC5, PSMD7 and HSPA8/HSC70. Interacts (via B30.2/SPRY domain) with HSPA1A/B. Interacts with PSMC2, MAP3K7/TAK1, TAB2 and TAB3. Interacts with SQSTM1. Interacts with TRIM6 and TRIM34. Interacts with ULK1 (phosphorylated form), GABARAP, GABARAPL1, GABARAPL2, MAP1LC3A, MAP1LC3C and BECN1. Degraded in a proteasome-independent fashion in the absence of viral infection but in a proteasome-dependent fashion following exposure to restriction sensitive virus. Post-translationally, autoubiquitinated in a RING finger- and UBE2D2-dependent manner. Monoubiquitinated by TRIM21. Deubiquitinated by Yersinia YopJ. Ubiquitination may not lead to proteasomal degradation.

The protein resides in the cytoplasm. Its subcellular location is the nucleus. The enzyme catalyses S-ubiquitinyl-[E2 ubiquitin-conjugating enzyme]-L-cysteine + [acceptor protein]-L-lysine = [E2 ubiquitin-conjugating enzyme]-L-cysteine + N(6)-ubiquitinyl-[acceptor protein]-L-lysine.. It functions in the pathway protein modification; protein ubiquitination. Functionally, capsid-specific restriction factor that prevents infection from non-host-adapted retroviruses. Blocks viral replication early in the life cycle, after viral entry but before reverse transcription. In addition to acting as a capsid-specific restriction factor, also acts as a pattern recognition receptor that activates innate immune signaling in response to the retroviral capsid lattice. Binding to the viral capsid triggers its E3 ubiquitin ligase activity, and in concert with the heterodimeric ubiquitin conjugating enzyme complex UBE2V1-UBE2N (also known as UBC13-UEV1A complex) generates 'Lys-63'-linked polyubiquitin chains, which in turn are catalysts in the autophosphorylation of the MAP3K7/TAK1 complex (includes TAK1, TAB2, and TAB3). Activation of the MAP3K7/TAK1 complex by autophosphorylation results in the induction and expression of NF-kappa-B and MAPK-responsive inflammatory genes, thereby leading to an innate immune response in the infected cell. Restricts infection by human immunodeficiency virus type 1 (HIV-1), simian immunodeficiency virus (SIV-mac) and N-tropic murine leukemia viruse (N-MLV). Plays a role in regulating autophagy through activation of autophagy regulator BECN1 by causing its dissociation from its inhibitors BCL2 and TAB2. The protein is Tripartite motif-containing protein 5 (TRIM5) of Chlorocebus tantalus (Tantalus monkey).